The primary structure comprises 513 residues: Ankyrin repeat domain-containing protein 13C-B (513 aa).

Over residues 1-19 (MTGEKIRSLHRDQKPSKDE) the composition is skewed to basic and acidic residues. 2 disordered regions span residues 1–34 (MTGE…DGTF) and 55–77 (PSNP…PMTP). The span at 20–29 (DLLEPDEEAT) shows a compositional bias: acidic residues. 3 ANK repeats span residues 83–114 (DVYF…QKDN), 115–144 (HGNT…PVKV), and 148–177 (QGWS…QQSR).

It localises to the endoplasmic reticulum membrane. Its function is as follows. Acts as a molecular chaperone for G protein-coupled receptors, regulating their biogenesis and exit from the ER. This Xenopus laevis (African clawed frog) protein is Ankyrin repeat domain-containing protein 13C-B (ankrd13c-b).